The sequence spans 394 residues: Keratin, type I cuticular Ha4 (394 aa).

A head region spans residues M1–E56. The region spanning E56–L367 is the IF rod domain. The tract at residues K57–R91 is coil 1A. Residues S92 to S102 form a linker 1 region. A coil 1B region spans residues Y103–S203. Residues Q204–V219 are linker 12. The coil 2 stretch occupies residues D220 to E363. The tract at residues D364 to N394 is tail.

The protein belongs to the intermediate filament family. As to expression, expressed in the hair follicles.

This is Keratin, type I cuticular Ha4 (KRT34) from Homo sapiens (Human).